The primary structure comprises 415 residues: Stimulator of interferon genes protein (415 aa).

Positions 29 to 163 constitute a TIR domain; it reads HVYHAFISYC…DIIQAISKPE (135 aa). Glutamate 104 is an active-site residue. Arginine 256 contributes to the 2',3'-cGAMP binding site. Residues 387–415 form a disordered region; that stretch reads KSPSSTNMVKSEPNIYREESGKTKSVERG. Over residues 401 to 415 the composition is skewed to basic and acidic residues; that stretch reads IYREESGKTKSVERG.

It in the N-terminal section; belongs to the Toll-like receptor family. The protein in the C-terminal section; belongs to the TMEM173 family. Homodimer.

It catalyses the reaction NAD(+) + H2O = ADP-D-ribose + nicotinamide + H(+). Sensor of cytosolic DNA from bacteria and viruses that promotes autophagy. Binds c-di-AMP, 2'3'-cGAMP, 3'3'-cGAMP and to a lesser extent c-di-GMP. Nucleotide binding has not been seen to stimulate NAD(+) hydrolase activity. This Magallana gigas (Pacific oyster) protein is Stimulator of interferon genes protein.